Here is a 267-residue protein sequence, read N- to C-terminus: Putative carbamate hydrolase RutD (267 aa).

Residues 23–139 form the AB hydrolase-1 domain; sequence VVLLSSGLGG…IQRCFDTRIH (117 aa).

Belongs to the AB hydrolase superfamily. Hydrolase RutD family.

It catalyses the reaction carbamate + 2 H(+) = NH4(+) + CO2. In terms of biological role, involved in pyrimidine catabolism. May facilitate the hydrolysis of carbamate, a reaction that can also occur spontaneously. This chain is Putative carbamate hydrolase RutD, found in Caulobacter segnis (strain ATCC 21756 / DSM 7131 / JCM 7823 / NBRC 15250 / LMG 17158 / TK0059) (Mycoplana segnis).